Here is a 451-residue protein sequence, read N- to C-terminus: Bifunctional protein GlmU (451 aa).

The pyrophosphorylase stretch occupies residues 1 to 229 (MQRHAIILAA…FDEIIGVNDR (229 aa)). UDP-N-acetyl-alpha-D-glucosamine contacts are provided by residues 8-11 (LAAG), K22, Q72, and 77-78 (GT). D102 is a binding site for Mg(2+). G139, E154, and N227 together coordinate UDP-N-acetyl-alpha-D-glucosamine. Mg(2+) is bound at residue N227. Residues 230-250 (LMLSEAEKALQQRINRYHMEN) form a linker region. The N-acetyltransferase stretch occupies residues 251–451 (GVTIIDPSST…QVNKEGYLKK (201 aa)). UDP-N-acetyl-alpha-D-glucosamine-binding residues include R332 and K350. The active-site Proton acceptor is the H362. Residues Y365 and N376 each contribute to the UDP-N-acetyl-alpha-D-glucosamine site. Acetyl-CoA is bound by residues 385–386 (NY), A422, and R439.

The protein in the N-terminal section; belongs to the N-acetylglucosamine-1-phosphate uridyltransferase family. This sequence in the C-terminal section; belongs to the transferase hexapeptide repeat family. In terms of assembly, homotrimer. The cofactor is Mg(2+).

The protein resides in the cytoplasm. The catalysed reaction is alpha-D-glucosamine 1-phosphate + acetyl-CoA = N-acetyl-alpha-D-glucosamine 1-phosphate + CoA + H(+). It catalyses the reaction N-acetyl-alpha-D-glucosamine 1-phosphate + UTP + H(+) = UDP-N-acetyl-alpha-D-glucosamine + diphosphate. The protein operates within nucleotide-sugar biosynthesis; UDP-N-acetyl-alpha-D-glucosamine biosynthesis; N-acetyl-alpha-D-glucosamine 1-phosphate from alpha-D-glucosamine 6-phosphate (route II): step 2/2. Its pathway is nucleotide-sugar biosynthesis; UDP-N-acetyl-alpha-D-glucosamine biosynthesis; UDP-N-acetyl-alpha-D-glucosamine from N-acetyl-alpha-D-glucosamine 1-phosphate: step 1/1. It functions in the pathway bacterial outer membrane biogenesis; LPS lipid A biosynthesis. In terms of biological role, catalyzes the last two sequential reactions in the de novo biosynthetic pathway for UDP-N-acetylglucosamine (UDP-GlcNAc). The C-terminal domain catalyzes the transfer of acetyl group from acetyl coenzyme A to glucosamine-1-phosphate (GlcN-1-P) to produce N-acetylglucosamine-1-phosphate (GlcNAc-1-P), which is converted into UDP-GlcNAc by the transfer of uridine 5-monophosphate (from uridine 5-triphosphate), a reaction catalyzed by the N-terminal domain. The sequence is that of Bifunctional protein GlmU from Staphylococcus epidermidis (strain ATCC 35984 / DSM 28319 / BCRC 17069 / CCUG 31568 / BM 3577 / RP62A).